Here is a 578-residue protein sequence, read N- to C-terminus: 2-succinyl-5-enolpyruvyl-6-hydroxy-3-cyclohexene-1-carboxylate synthase (578 aa).

This sequence belongs to the TPP enzyme family. MenD subfamily. As to quaternary structure, homodimer. It depends on Mg(2+) as a cofactor. The cofactor is Mn(2+). Thiamine diphosphate serves as cofactor.

It catalyses the reaction isochorismate + 2-oxoglutarate + H(+) = 5-enolpyruvoyl-6-hydroxy-2-succinyl-cyclohex-3-ene-1-carboxylate + CO2. It participates in quinol/quinone metabolism; 1,4-dihydroxy-2-naphthoate biosynthesis; 1,4-dihydroxy-2-naphthoate from chorismate: step 2/7. It functions in the pathway quinol/quinone metabolism; menaquinone biosynthesis. Catalyzes the thiamine diphosphate-dependent decarboxylation of 2-oxoglutarate and the subsequent addition of the resulting succinic semialdehyde-thiamine pyrophosphate anion to isochorismate to yield 2-succinyl-5-enolpyruvyl-6-hydroxy-3-cyclohexene-1-carboxylate (SEPHCHC). The chain is 2-succinyl-5-enolpyruvyl-6-hydroxy-3-cyclohexene-1-carboxylate synthase from Prosthecochloris aestuarii (strain DSM 271 / SK 413).